Consider the following 244-residue polypeptide: NAD(P)H-quinone oxidoreductase subunit K (244 aa).

Residues Cys-60, Cys-61, Cys-125, and Cys-156 each coordinate [4Fe-4S] cluster. Residues Lys-213–Lys-244 form a disordered region. Residues Glu-231–Lys-244 show a composition bias toward polar residues.

Belongs to the complex I 20 kDa subunit family. NDH-1 can be composed of about 15 different subunits; different subcomplexes with different compositions have been identified which probably have different functions. Requires [4Fe-4S] cluster as cofactor.

The protein localises to the cellular thylakoid membrane. The catalysed reaction is a plastoquinone + NADH + (n+1) H(+)(in) = a plastoquinol + NAD(+) + n H(+)(out). The enzyme catalyses a plastoquinone + NADPH + (n+1) H(+)(in) = a plastoquinol + NADP(+) + n H(+)(out). NDH-1 shuttles electrons from an unknown electron donor, via FMN and iron-sulfur (Fe-S) centers, to quinones in the respiratory and/or the photosynthetic chain. The immediate electron acceptor for the enzyme in this species is believed to be plastoquinone. Couples the redox reaction to proton translocation, and thus conserves the redox energy in a proton gradient. Cyanobacterial NDH-1 also plays a role in inorganic carbon-concentration. The polypeptide is NAD(P)H-quinone oxidoreductase subunit K (Prochlorococcus marinus subsp. pastoris (strain CCMP1986 / NIES-2087 / MED4)).